The following is a 455-amino-acid chain: Probable glycine dehydrogenase (decarboxylating) subunit 1 (455 aa).

The protein belongs to the GcvP family. N-terminal subunit subfamily. In terms of assembly, the glycine cleavage system is composed of four proteins: P, T, L and H. In this organism, the P 'protein' is a heterodimer of two subunits.

It carries out the reaction N(6)-[(R)-lipoyl]-L-lysyl-[glycine-cleavage complex H protein] + glycine + H(+) = N(6)-[(R)-S(8)-aminomethyldihydrolipoyl]-L-lysyl-[glycine-cleavage complex H protein] + CO2. Its function is as follows. The glycine cleavage system catalyzes the degradation of glycine. The P protein binds the alpha-amino group of glycine through its pyridoxal phosphate cofactor; CO(2) is released and the remaining methylamine moiety is then transferred to the lipoamide cofactor of the H protein. This chain is Probable glycine dehydrogenase (decarboxylating) subunit 1, found in Francisella tularensis subsp. novicida (strain U112).